Here is a 410-residue protein sequence, read N- to C-terminus: BTB and MATH domain-containing protein 42 (410 aa).

A compositionally biased stretch (polar residues) spans 1 to 19 (MSSRSSWSSTEQINRTISS). A disordered region spans residues 1 to 29 (MSSRSSWSSTEQINRTISSRADDLPPQPR). In terms of domain architecture, MATH spans 45–173 (STKLEWKIEQ…DGTLFLICEV (129 aa)). The BTB domain occupies 219 to 287 (TDCVIHVGNK…MYTGATESLE (69 aa)). The disordered stretch occupies residues 389-410 (TSNIPISVSPPPARKRLRRSAK). Basic residues predominate over residues 401–410 (ARKRLRRSAK).

As to quaternary structure, interacts with cul-3.

Its pathway is protein modification; protein ubiquitination. Its function is as follows. Probable substrate-specific adapter of an E3 ubiquitin-protein ligase complex which mediates the ubiquitination and subsequent proteasomal degradation of target proteins. The chain is BTB and MATH domain-containing protein 42 (bath-42) from Caenorhabditis elegans.